Reading from the N-terminus, the 285-residue chain is Type II secretion system protein C (285 aa).

At 1–27 the chain is on the cytoplasmic side; sequence MSKGIKMHNSVMRLTIPNKKIINYAPH. Residues 28 to 46 form a helical membrane-spanning segment; sequence IVTSIILFFICQQLAQLTW. Topologically, residues 47–285 are periplasmic; the sequence is KIILPVNFTD…NDIYLALRDE (239 aa).

It belongs to the GSP C family.

The protein resides in the cell inner membrane. Functionally, involved in a type II secretion system (T2SS, formerly general secretion pathway, GSP) for the export of proteins. Required for the translocation of pullulanase. This chain is Type II secretion system protein C (pulC), found in Klebsiella pneumoniae.